Here is a 304-residue protein sequence, read N- to C-terminus: MAATLWRLYSKSICNSLQGIILNKPFIQKQLLLSSRTRSLSFSSDSQFGSATAEVCSNTGLKTGGGIIVKEGFLRWENGGGTCHSSAQIYSSALVEFGAVVHEKAVLGAEVHVGSGTVIGPSVDIGPSTRIGYNVSISNCSIGDSCVIHNGVCIGQDGFGFYVDEHGNMVKKPQTLNVKIGNRVEIGANTCIDRGSWRETVIEDDTKIDNLVQIGHNVIIGKCCLLCGQVGIAGSVTIGDYVALGGRAAVRDHVSIVSKVRLAANSCVTRNITEPGDFGGFPAVPIHEWRKQIVRAQIANKREI.

The transit peptide at 1 to 47 (MAATLWRLYSKSICNSLQGIILNKPFIQKQLLLSSRTRSLSFSSDSQ) directs the protein to the mitochondrion. Position 159-161 (159-161 (FGF)) interacts with UDP-N-acetyl-alpha-D-glucosamine. Hexadecanoate contacts are provided by D209 and Q213. The Proton acceptor role is filled by H216. The UDP-N-acetyl-alpha-D-glucosamine site is built by N217, S235, and H253.

Belongs to the transferase hexapeptide repeat family. LpxD subfamily. As to quaternary structure, homotrimer.

Its subcellular location is the mitochondrion. The enzyme catalyses a UDP-3-O-[(3R)-3-hydroxyacyl]-alpha-D-glucosamine + a (3R)-hydroxyacyl-[ACP] = a UDP-2-N,3-O-bis[(3R)-3-hydroxyacyl]-alpha-D-glucosamine + holo-[ACP] + H(+). It participates in glycolipid biosynthesis; lipid IV(A) biosynthesis; lipid IV(A) from (3R)-3-hydroxytetradecanoyl-[acyl-carrier-protein] and UDP-N-acetyl-alpha-D-glucosamine: step 3/6. In terms of biological role, involved in the biosynthesis of lipid A, a phosphorylated glycolipid that in bacteria anchors the lipopolysaccharide to the outer membrane of the cell. Lipid A-like molecules in plants may serve as structural components of the outer membranes of mitochondria and/or chloroplasts, or may be involved in signal transduction or plant defense responses. The sequence is that of Probable UDP-3-O-acylglucosamine N-acyltransferase 2, mitochondrial (LPXD2) from Arabidopsis thaliana (Mouse-ear cress).